A 391-amino-acid chain; its full sequence is Phosphoglycerate kinase (391 aa).

Residues 16 to 18, R31, 54 to 57, R108, and R141 contribute to the substrate site; these read DLN and HLGR. ATP contacts are provided by residues K192, E314, and 340 to 343; that span reads GGDT.

It belongs to the phosphoglycerate kinase family. As to quaternary structure, monomer.

Its subcellular location is the cytoplasm. The catalysed reaction is (2R)-3-phosphoglycerate + ATP = (2R)-3-phospho-glyceroyl phosphate + ADP. It functions in the pathway carbohydrate degradation; glycolysis; pyruvate from D-glyceraldehyde 3-phosphate: step 2/5. The polypeptide is Phosphoglycerate kinase (Coxiella burnetii (strain RSA 493 / Nine Mile phase I)).